A 1063-amino-acid chain; its full sequence is Error-prone DNA polymerase (1063 aa).

This sequence belongs to the DNA polymerase type-C family. DnaE2 subfamily.

It localises to the cytoplasm. It catalyses the reaction DNA(n) + a 2'-deoxyribonucleoside 5'-triphosphate = DNA(n+1) + diphosphate. Its function is as follows. DNA polymerase involved in damage-induced mutagenesis and translesion synthesis (TLS). It is not the major replicative DNA polymerase. The polypeptide is Error-prone DNA polymerase (Burkholderia mallei (strain ATCC 23344)).